Consider the following 167-residue polypeptide: Endoribonuclease YbeY (167 aa).

Residues histidine 131, histidine 135, and histidine 141 each contribute to the Zn(2+) site.

It belongs to the endoribonuclease YbeY family. Zn(2+) is required as a cofactor.

Its subcellular location is the cytoplasm. In terms of biological role, single strand-specific metallo-endoribonuclease involved in late-stage 70S ribosome quality control and in maturation of the 3' terminus of the 16S rRNA. In Rickettsia rickettsii (strain Sheila Smith), this protein is Endoribonuclease YbeY.